The chain runs to 90 residues: Large ribosomal subunit protein bL31 (90 aa).

Residues 65 to 90 (YSKQEGSGSKSNKSKSTKSKKGKGKK) are disordered. The span at 76-90 (NKSKSTKSKKGKGKK) shows a compositional bias: basic residues.

This sequence belongs to the bacterial ribosomal protein bL31 family. Type A subfamily. In terms of assembly, part of the 50S ribosomal subunit.

Binds the 23S rRNA. This Trichodesmium erythraeum (strain IMS101) protein is Large ribosomal subunit protein bL31.